The following is a 431-amino-acid chain: Salivary plasminogen activator beta (431 aa).

The N-terminal stretch at 1–36 is a signal peptide; the sequence is MVNTMKTKLLCVLLLCGAVFSLPRQETYRQLARGSR. Residues 37–75 form the EGF-like domain; the sequence is AYGGCSELRCFNGGTCWQAASFSDFVCQCPKGYTGKQCE. 12 cysteine pairs are disulfide-bonded: Cys-41/Cys-52, Cys-46/Cys-63, Cys-65/Cys-74, Cys-82/Cys-163, Cys-103/Cys-145, Cys-134/Cys-158, Cys-168/Cys-299, Cys-211/Cys-227, Cys-219/Cys-288, Cys-313/Cys-388, Cys-345/Cys-361, and Cys-378/Cys-406. One can recognise a Kringle domain in the interval 82–163; sequence CYKDQGVTYR…ILEFCSVPVC (82 aa). The N-linked (GlcNAc...) asparagine glycan is linked to Asn-139. In terms of domain architecture, Peptidase S1 spans 180–430; that stretch reads STGGLFTDIT…YLGWIRDNMR (251 aa). Catalysis depends on charge relay system residues His-226 and Asp-275. Asn-352 carries an N-linked (GlcNAc...) asparagine glycan. Ser-382 acts as the Charge relay system in catalysis.

It belongs to the peptidase S1 family. As to quaternary structure, monomer.

The protein localises to the secreted. It carries out the reaction Specific cleavage of Arg-|-Val bond in plasminogen to form plasmin.. Its function is as follows. Probably essential to support the feeding habits of this exclusively haematophagous animal. Probable potent thrombolytic agent. The polypeptide is Salivary plasminogen activator beta (Desmodus rotundus (Vampire bat)).